The sequence spans 412 residues: Serine hydroxymethyltransferase (412 aa).

(6S)-5,6,7,8-tetrahydrofolate contacts are provided by residues leucine 117 and 121–123; that span reads GHL. N6-(pyridoxal phosphate)lysine is present on lysine 226. (6S)-5,6,7,8-tetrahydrofolate is bound by residues glutamate 242 and 350–352; that span reads SPF.

This sequence belongs to the SHMT family. As to quaternary structure, homodimer. It depends on pyridoxal 5'-phosphate as a cofactor.

It localises to the cytoplasm. The catalysed reaction is (6R)-5,10-methylene-5,6,7,8-tetrahydrofolate + glycine + H2O = (6S)-5,6,7,8-tetrahydrofolate + L-serine. It functions in the pathway one-carbon metabolism; tetrahydrofolate interconversion. Its pathway is amino-acid biosynthesis; glycine biosynthesis; glycine from L-serine: step 1/1. Functionally, catalyzes the reversible interconversion of serine and glycine with tetrahydrofolate (THF) serving as the one-carbon carrier. Also exhibits THF-independent aldolase activity toward beta-hydroxyamino acids, producing glycine and aldehydes, via a retro-aldol mechanism. This chain is Serine hydroxymethyltransferase, found in Methanosarcina mazei (strain ATCC BAA-159 / DSM 3647 / Goe1 / Go1 / JCM 11833 / OCM 88) (Methanosarcina frisia).